Consider the following 26-residue polypeptide: Omega-conotoxin TVIA (26 aa).

Intrachain disulfides connect cysteine 1/cysteine 16, cysteine 8/cysteine 19, and cysteine 15/cysteine 26. 4-hydroxyproline occurs at positions 4, 10, and 21.

This sequence belongs to the conotoxin O1 superfamily. As to expression, expressed by the venom duct.

It localises to the secreted. Functionally, omega-conotoxins act at presynaptic membranes, they bind and block voltage-gated calcium channels (Cav). In Conus tulipa (Fish-hunting cone snail), this protein is Omega-conotoxin TVIA.